The following is a 248-amino-acid chain: 2,3-bisphosphoglycerate-dependent phosphoglycerate mutase (248 aa).

Substrate is bound by residues 8–15 (RHGESIWN), 21–22 (TG), Arg-60, 87–90 (EKHY), Lys-98, 114–115 (RR), and 183–184 (GN). His-9 serves as the catalytic Tele-phosphohistidine intermediate. Residue Glu-87 is the Proton donor/acceptor of the active site.

This sequence belongs to the phosphoglycerate mutase family. BPG-dependent PGAM subfamily.

It carries out the reaction (2R)-2-phosphoglycerate = (2R)-3-phosphoglycerate. It participates in carbohydrate degradation; glycolysis; pyruvate from D-glyceraldehyde 3-phosphate: step 3/5. Functionally, catalyzes the interconversion of 2-phosphoglycerate and 3-phosphoglycerate. The chain is 2,3-bisphosphoglycerate-dependent phosphoglycerate mutase from Parabacteroides distasonis (strain ATCC 8503 / DSM 20701 / CIP 104284 / JCM 5825 / NCTC 11152).